Here is a 196-residue protein sequence, read N- to C-terminus: Probable GTP-binding protein EngB (196 aa).

Residues 24-196 (ELSEVALSGR…IWNLIEPYIS (173 aa)) form the EngB-type G domain. Residues 32-39 (GRSNVGKS), 59-63 (GKTQT), 77-80 (DVPG), 144-147 (TKED), and 176-178 (YSS) each bind GTP. Residues Ser-39 and Thr-61 each coordinate Mg(2+).

This sequence belongs to the TRAFAC class TrmE-Era-EngA-EngB-Septin-like GTPase superfamily. EngB GTPase family. The cofactor is Mg(2+).

In terms of biological role, necessary for normal cell division and for the maintenance of normal septation. This is Probable GTP-binding protein EngB from Staphylococcus aureus (strain Mu3 / ATCC 700698).